The primary structure comprises 157 residues: 2-C-methyl-D-erythritol 2,4-cyclodiphosphate synthase (157 aa).

Positions 9 and 11 each coordinate a divalent metal cation. Residues 9 to 11 and 35 to 36 each bind 4-CDP-2-C-methyl-D-erythritol 2-phosphate; these read DVH and HS. His43 provides a ligand contact to a divalent metal cation. 4-CDP-2-C-methyl-D-erythritol 2-phosphate-binding positions include 57 to 59, Phe140, and Arg143; that span reads DIG.

Belongs to the IspF family. As to quaternary structure, homotrimer. The cofactor is a divalent metal cation.

It catalyses the reaction 4-CDP-2-C-methyl-D-erythritol 2-phosphate = 2-C-methyl-D-erythritol 2,4-cyclic diphosphate + CMP. The protein operates within isoprenoid biosynthesis; isopentenyl diphosphate biosynthesis via DXP pathway; isopentenyl diphosphate from 1-deoxy-D-xylulose 5-phosphate: step 4/6. Functionally, involved in the biosynthesis of isopentenyl diphosphate (IPP) and dimethylallyl diphosphate (DMAPP), two major building blocks of isoprenoid compounds. Catalyzes the conversion of 4-diphosphocytidyl-2-C-methyl-D-erythritol 2-phosphate (CDP-ME2P) to 2-C-methyl-D-erythritol 2,4-cyclodiphosphate (ME-CPP) with a corresponding release of cytidine 5-monophosphate (CMP). The polypeptide is 2-C-methyl-D-erythritol 2,4-cyclodiphosphate synthase (Caldicellulosiruptor bescii (strain ATCC BAA-1888 / DSM 6725 / KCTC 15123 / Z-1320) (Anaerocellum thermophilum)).